Consider the following 427-residue polypeptide: MLDIKYVRENPDAVKKMLEMRLLASESKKIDELIRYDSERKAKVTESDTLKAMRNSVTQEIAKIKREKTGSADELIAEMKIVSDRISEIDAELREIETKQEELLLAVPNILHESVPEGKSAADNVVYKEVMDCKREFDFKPKDHIELGKSLGMLDFERGAKIAGAGFPLYIGKGASLERALINFMLDLHLEKHGYKEVFPPFFVNRDSLRGTGQWPKFADQVYYMNDDDIYAIPTAEVPVTNMHRDEMLQSKELPIKYAAYSACFRREAGSYGKDTKGFLRVHQFNKVEMVKFVLPETSYDELEALLGDAEDVLKALEIPYRVLLLCSGDISANAAKCYDIEVWSPAEEKFLEASSCSNFEDYQARRAQIRFRRQPKAKPEFVHTLNGSGLATSRLMVSLMENYQTPDGKIQVPKVLQKYMGCEVIG.

235–237 (TAE) contributes to the L-serine binding site. ATP is bound by residues 266 to 268 (RRE) and valine 282. Glutamate 289 contacts L-serine. Position 353–356 (353–356 (EASS)) interacts with ATP. Residue serine 389 participates in L-serine binding.

It belongs to the class-II aminoacyl-tRNA synthetase family. Type-1 seryl-tRNA synthetase subfamily. In terms of assembly, homodimer. The tRNA molecule binds across the dimer.

The protein localises to the cytoplasm. It carries out the reaction tRNA(Ser) + L-serine + ATP = L-seryl-tRNA(Ser) + AMP + diphosphate + H(+). The catalysed reaction is tRNA(Sec) + L-serine + ATP = L-seryl-tRNA(Sec) + AMP + diphosphate + H(+). Its pathway is aminoacyl-tRNA biosynthesis; selenocysteinyl-tRNA(Sec) biosynthesis; L-seryl-tRNA(Sec) from L-serine and tRNA(Sec): step 1/1. Its function is as follows. Catalyzes the attachment of serine to tRNA(Ser). Is also able to aminoacylate tRNA(Sec) with serine, to form the misacylated tRNA L-seryl-tRNA(Sec), which will be further converted into selenocysteinyl-tRNA(Sec). The polypeptide is Serine--tRNA ligase (Chloroherpeton thalassium (strain ATCC 35110 / GB-78)).